The chain runs to 391 residues: D-xylose 1-dehydrogenase (NADP(+)) (391 aa).

It belongs to the Gfo/Idh/MocA family.

It carries out the reaction D-xylose + NADP(+) = D-xylono-1,5-lactone + NADPH + H(+). Functionally, NADP-dependent D-xylose dehydrogenase catalyzing the oxydation of D-xylose into D-xylonolactone. Also displays some, albeit lower activity with D-glucose, D-galactose and L-arabinose as substrate. Probably not involved in D-xylose degradation, as it has been shown that H.jecorina assimilates D-xylose via D-xylose reductase and xylitol dehydrogenase, and it is unable to grow on D-xylonic acid as sole carbon source. May play a role in the regeneration of NADP(+) in the presence of D-xylose. The chain is D-xylose 1-dehydrogenase (NADP(+)) from Hypocrea jecorina (strain ATCC 56765 / BCRC 32924 / NRRL 11460 / Rut C-30) (Trichoderma reesei).